The primary structure comprises 172 residues: S-ribosylhomocysteine lyase (172 aa).

Positions 54, 58, and 128 each coordinate Fe cation.

Belongs to the LuxS family. Homodimer. It depends on Fe cation as a cofactor.

It carries out the reaction S-(5-deoxy-D-ribos-5-yl)-L-homocysteine = (S)-4,5-dihydroxypentane-2,3-dione + L-homocysteine. Functionally, involved in the synthesis of autoinducer 2 (AI-2) which is secreted by bacteria and is used to communicate both the cell density and the metabolic potential of the environment. The regulation of gene expression in response to changes in cell density is called quorum sensing. Catalyzes the transformation of S-ribosylhomocysteine (RHC) to homocysteine (HC) and 4,5-dihydroxy-2,3-pentadione (DPD). The sequence is that of S-ribosylhomocysteine lyase from Vibrio atlanticus (strain LGP32) (Vibrio splendidus (strain Mel32)).